Reading from the N-terminus, the 223-residue chain is MKFFIFTCLLAVALAKHKMEHVSSSEEPINISQEIYKQEKNMAIHPRKEKLCTTSCEEVVRNADEEEYSIRSSSEESAEVAPEEVKITVDDKHYQKALNEINQFYQKFPQYLQYLYQGPIVLNPWDQVKRNAGPFTPTVNREQLSTSEENSKKTIDMESTEVFTKKTKLTEEEKNRLNFLKKISQYYQKFAWPQYLKTVDQHQKAMKPWTQPKTNAIPYVRYL.

A signal peptide spans 1 to 15; the sequence is MKFFIFTCLLAVALA. Phosphoserine is present on residues Ser-23, Ser-24, Ser-25, Ser-72, Ser-73, Ser-74, Ser-77, Ser-145, Ser-147, Ser-151, and Ser-159. The stretch at residues 77–141 is a repeat; sequence SAEVAPEEVK…AGPFTPTVNR (65 aa). A repeat spans 159–223; that stretch reads STEVFTKKTK…TNAIPYVRYL (65 aa).

This sequence belongs to the alpha-casein family. In terms of tissue distribution, mammary gland specific. Secreted in milk.

The protein localises to the secreted. In terms of biological role, important role in the capacity of milk to transport calcium phosphate. The sequence is that of Alpha-S2-casein (CSN1S2) from Ovis aries (Sheep).